We begin with the raw amino-acid sequence, 586 residues long: Ezrin (586 aa).

In terms of domain architecture, FERM spans 2–296 (PKPINVRVTT…NHELYMRRRK (295 aa)). Lysine 60 bears the N6-acetyllysine mark. Positions 115-120 (IYCPPE) match the [IL]-x-C-x-x-[DE] motif motif. The residue at position 146 (tyrosine 146) is a Phosphotyrosine; by PDGFR. Residues 244-586 (EIRNISFNDK…KQRIDEFEAL (343 aa)) form an interaction with SCYL3 region. The stretch at 302-462 (VQQMKAQARE…QDDLVKTKEE (161 aa)) forms a coiled coil. The disordered stretch occupies residues 306–341 (KAQAREEKHQKQLERQQLETEKKRRETVEREKEQMM). Basic and acidic residues predominate over residues 308 to 341 (QAREEKHQKQLERQQLETEKKRRETVEREKEQMM). Tyrosine 354 carries the phosphotyrosine; by PDGFR modification. Position 366 is a phosphoserine (serine 366). Tyrosine 478 is modified (phosphotyrosine). Residues 485–564 (VQESLQDEGA…NENMRQGRDK (80 aa)) are disordered. Residues 507–528 (GIRDDRNEEKRITEAEKNERVQ) show a composition bias toward basic and acidic residues. Over residues 530-539 (QLLTLSSELS) the composition is skewed to polar residues. The residue at position 535 (serine 535) is a Phosphoserine. Residues 540-564 (QARDENKRTHNDIIHNENMRQGRDK) are compositionally biased toward basic and acidic residues. Threonine 567 is subject to Phosphothreonine; by ROCK2 and PKC/PRKCI.

Monomer. Homodimer. Interacts with PALS1 and NHERF2. Found in a complex with EZR, PODXL and NHERF2. Interacts with MCC, PLEKHG6, PODXL, SCYL3/PACE1, NHERF1 and TMEM8B. Interacts (when phosphorylated) with FES/FPS. Interacts with dimeric S100P, the interaction may be activating through unmasking of F-actin binding sites. Identified in complexes that contain VIM, EZR, AHNAK, BFSP1, BFSP2, ANK2, PLEC, PRX and spectrin. Detected in a complex composed of at least EZR, AHNAK, PPL and PRX. Interacts with PDPN (via cytoplasmic domain); activates RHOA and promotes epithelial-mesenchymal transition. Interacts with SPN/CD43 cytoplasmic tail, CD44 and ICAM2. Interacts with SLC9A3; interaction targets SLC9A3 to the apical membrane. Interacts with SLC9A1; regulates interactions of SLC9A1 with cytoskeletal and promotes stress fiber formation. Interacts with CLIC5; may work together in a complex which also includes RDX and MYO6 to stabilize linkages between the plasma membrane and subjacent actin cytoskeleton at the base of stereocilia. In terms of processing, phosphorylated by tyrosine-protein kinases. Phosphorylation by ROCK2 suppresses the head-to-tail association of the N-terminal and C-terminal halves resulting in an opened conformation which is capable of actin and membrane-binding. Post-translationally, S-nitrosylation is induced by interferon-gamma and oxidatively-modified low-densitity lipoprotein (LDL(ox)) possibly implicating the iNOS-S100A8/9 transnitrosylase complex. As to expression, expressed in cerebral cortex, basal ganglia, hippocampus, hypophysis, and optic nerve. Weakly expressed in brain stem and diencephalon. Stronger expression was detected in gray matter of frontal lobe compared to white matter (at protein level). Component of the microvilli of intestinal epithelial cells. Preferentially expressed in astrocytes of hippocampus, frontal cortex, thalamus, parahippocampal cortex, amygdala, insula, and corpus callosum. Not detected in neurons in most tissues studied.

The protein localises to the apical cell membrane. It is found in the cell projection. The protein resides in the microvillus membrane. It localises to the ruffle membrane. Its subcellular location is the cytoplasm. The protein localises to the cell cortex. It is found in the cytoskeleton. The protein resides in the microvillus. A head-to-tail association, of the N-terminal and C-terminal halves results in a closed conformation (inactive form) which is incapable of actin or membrane-binding. Probably involved in connections of major cytoskeletal structures to the plasma membrane. In epithelial cells, required for the formation of microvilli and membrane ruffles on the apical pole. Along with PLEKHG6, required for normal macropinocytosis. This Homo sapiens (Human) protein is Ezrin (EZR).